The sequence spans 361 residues: Chorismate synthase (361 aa).

R48 and R54 together coordinate NADP(+). FMN is bound by residues R125–S127, N238–A239, G278, K293–S297, and R319.

This sequence belongs to the chorismate synthase family. Homotetramer. FMNH2 is required as a cofactor.

It carries out the reaction 5-O-(1-carboxyvinyl)-3-phosphoshikimate = chorismate + phosphate. It participates in metabolic intermediate biosynthesis; chorismate biosynthesis; chorismate from D-erythrose 4-phosphate and phosphoenolpyruvate: step 7/7. Functionally, catalyzes the anti-1,4-elimination of the C-3 phosphate and the C-6 proR hydrogen from 5-enolpyruvylshikimate-3-phosphate (EPSP) to yield chorismate, which is the branch point compound that serves as the starting substrate for the three terminal pathways of aromatic amino acid biosynthesis. This reaction introduces a second double bond into the aromatic ring system. This chain is Chorismate synthase, found in Shigella flexneri.